The primary structure comprises 122 residues: MANNTTGFTRIIKAAGYSWKGLRAAWINEAAFRQEGVAVLLAVVIACWLDVDAITRVLLISSVMLVMIVEILNSAIEAVVDRIGSEYHELSGRAKDMGSAAVLIAIIVAVITWCILLWSHFG.

Residues Arg-10 and Tyr-17 each coordinate ATP. Residues Arg-10, Ala-14–Trp-19, and Arg-23–Trp-26 contribute to the substrate site. Residue Glu-29 participates in ATP binding. Glu-29 is an a divalent metal cation binding site. Residues Ala-31 to Glu-35, Trp-48 to Val-51, Arg-56, and Glu-70 each bind substrate. A helical membrane pass occupies residues Glu-35–Thr-55. A helical transmembrane segment spans residues Val-57–Glu-77. The active-site Proton acceptor is the Glu-70. Residues Glu-77, Glu-86 to His-88, and Lys-95 to Asp-96 contribute to the ATP site. Residue Glu-77 participates in a divalent metal cation binding. A helical membrane pass occupies residues Gly-98 to Trp-118. Residues Ser-99 and Trp-113 to Trp-118 contribute to the substrate site.

It belongs to the bacterial diacylglycerol kinase family. It depends on Mg(2+) as a cofactor.

It localises to the cell inner membrane. It catalyses the reaction a 1,2-diacyl-sn-glycerol + ATP = a 1,2-diacyl-sn-glycero-3-phosphate + ADP + H(+). In terms of biological role, catalyzes the ATP-dependent phosphorylation of sn-l,2-diacylglycerol (DAG) to phosphatidic acid. Involved in the recycling of diacylglycerol produced as a by-product during membrane-derived oligosaccharide (MDO) biosynthesis. This is Diacylglycerol kinase (dgkA) from Shigella flexneri.